The sequence spans 898 residues: Alanine--tRNA ligase (898 aa).

Zn(2+) contacts are provided by His582, His586, Cys685, and His689.

Belongs to the class-II aminoacyl-tRNA synthetase family. The cofactor is Zn(2+).

Its subcellular location is the cytoplasm. The catalysed reaction is tRNA(Ala) + L-alanine + ATP = L-alanyl-tRNA(Ala) + AMP + diphosphate. Functionally, catalyzes the attachment of alanine to tRNA(Ala) in a two-step reaction: alanine is first activated by ATP to form Ala-AMP and then transferred to the acceptor end of tRNA(Ala). Also edits incorrectly charged Ser-tRNA(Ala) and Gly-tRNA(Ala) via its editing domain. The chain is Alanine--tRNA ligase from Mycolicibacterium gilvum (strain PYR-GCK) (Mycobacterium gilvum (strain PYR-GCK)).